Here is a 123-residue protein sequence, read N- to C-terminus: Non-specific lipid-transfer protein (123 aa).

The first 25 residues, 1-25 (MAVKKMVEAVFVVGLVVTMMNVWGA), serve as a signal peptide directing secretion. 4 cysteine pairs are disulfide-bonded: Cys34-Cys82, Cys44-Cys59, Cys60-Cys104, and Cys80-Cys119.

It belongs to the plant LTP family.

Plant non-specific lipid-transfer proteins transfer phospholipids as well as galactolipids across membranes. May play a role in wax or cutin deposition in the cell walls of expanding epidermal cells and certain secretory tissues. This Pinus taeda (Loblolly pine) protein is Non-specific lipid-transfer protein.